A 492-amino-acid chain; its full sequence is Glycogen synthase 1 (492 aa).

Lys-15 serves as a coordination point for ADP-alpha-D-glucose.

Belongs to the glycosyltransferase 1 family. Bacterial/plant glycogen synthase subfamily.

It carries out the reaction [(1-&gt;4)-alpha-D-glucosyl](n) + ADP-alpha-D-glucose = [(1-&gt;4)-alpha-D-glucosyl](n+1) + ADP + H(+). Its pathway is glycan biosynthesis; glycogen biosynthesis. Functionally, synthesizes alpha-1,4-glucan chains using ADP-glucose. The chain is Glycogen synthase 1 from Trichormus variabilis (strain ATCC 29413 / PCC 7937) (Anabaena variabilis).